The chain runs to 403 residues: Phosphoglycerate kinase (403 aa).

Substrate contacts are provided by residues 22–24 (DLN), R37, 60–63 (HLGR), R119, and R156. Residues K206, G302, E333, and 359 to 362 (GGDS) contribute to the ATP site.

This sequence belongs to the phosphoglycerate kinase family. Monomer.

The protein resides in the cytoplasm. It carries out the reaction (2R)-3-phosphoglycerate + ATP = (2R)-3-phospho-glyceroyl phosphate + ADP. Its pathway is carbohydrate degradation; glycolysis; pyruvate from D-glyceraldehyde 3-phosphate: step 2/5. In Streptomyces coelicolor (strain ATCC BAA-471 / A3(2) / M145), this protein is Phosphoglycerate kinase (pgk).